Here is a 184-residue protein sequence, read N- to C-terminus: Ribosome-recycling factor (184 aa).

Belongs to the RRF family.

The protein resides in the cytoplasm. In terms of biological role, responsible for the release of ribosomes from messenger RNA at the termination of protein biosynthesis. May increase the efficiency of translation by recycling ribosomes from one round of translation to another. In Onion yellows phytoplasma (strain OY-M), this protein is Ribosome-recycling factor.